The chain runs to 553 residues: Putative transport protein KPN78578_40470 (553 aa).

5 helical membrane passes run 4-24 (IALTVSVLALVAVVGLWIGNV), 28-48 (GVGFGIGGVLFGGIIVGHFVD), 65-85 (FGLILFVYTIGIQVGPGFFAS), 95-115 (LFAILIVILGGLVTAVLHKLF), and 158-178 (MSYAMAYPFGICGILLTMWLV). RCK C-terminal domains are found at residues 192 to 276 (RFEE…VIGQ) and 279 to 361 (ATSL…ELGN). The next 6 helical transmembrane spans lie at 371-391 (MLPVFIGIGLGVLLGSIPLFI), 403-425 (AGGPLIMALILGRIGSIGKLYWF), 437-457 (LGIVLFLAVVGLKSGGDFVAT), 464-484 (LSWIAYGIFITAIPLLTVGVL), 493-513 (YLTLCGMLAGSMTDPPALAFA), and 532-552 (PLVMFLRIITPQLLAVLFWGL).

Belongs to the AAE transporter (TC 2.A.81) family. YidE subfamily.

The protein localises to the cell membrane. This is Putative transport protein KPN78578_40470 from Klebsiella pneumoniae subsp. pneumoniae (strain ATCC 700721 / MGH 78578).